The chain runs to 192 residues: Signal peptidase complex catalytic subunit SEC11C (192 aa).

Over 1–28 (MVRAGAVGTHLPTSSLDIFGDLRKMNKR) the chain is Cytoplasmic. A helical; Signal-anchor for type II membrane protein transmembrane segment spans residues 29–48 (QLYYQVLNFAMIVSSALMIW). The Lumenal portion of the chain corresponds to 49 to 192 (KGLIVLTGSE…GAYVLLKRES (144 aa)). Catalysis depends on charge relay system residues Ser68, His108, and Asp134. The interval 177–188 (ALLAVMGAYVLL) is C-terminal short (CTS) helix.

The protein belongs to the peptidase S26B family. As to quaternary structure, component of the signal peptidase complex paralog C (SPC-C) composed of a catalytic subunit SEC11C and three accessory subunits SPCS1, SPCS2 and SPCS3. Within the complex, interacts with SPCS2 and SPCS3. The complex induces a local thinning of the ER membrane which is used to measure the length of the signal peptide (SP) h-region of protein substrates. This ensures the selectivity of the complex towards h-regions shorter than 18-20 amino acids. May undergo processing at the N-terminus.

The protein resides in the endoplasmic reticulum membrane. The enzyme catalyses Cleavage of hydrophobic, N-terminal signal or leader sequences from secreted and periplasmic proteins.. In terms of biological role, catalytic component of the signal peptidase complex (SPC) which catalyzes the cleavage of N-terminal signal sequences from nascent proteins as they are translocated into the lumen of the endoplasmic reticulum. Specifically cleaves N-terminal signal peptides that contain a hydrophobic alpha-helix (h-region) shorter than 18-20 amino acids. The protein is Signal peptidase complex catalytic subunit SEC11C (Sec11c) of Mus musculus (Mouse).